The following is a 121-amino-acid chain: MSITKDQIIDAVAELSVMEVVELITAMEEKFGVSAAAAVAGAAGPAEVVEEQTEFDVIMTTFGENKVKAIKAVRAATGLGLKEAKDAVESCPVAIKEGISKADAEALKAVLEEIGATVELK.

The protein belongs to the bacterial ribosomal protein bL12 family. Homodimer. Part of the ribosomal stalk of the 50S ribosomal subunit. Forms a multimeric L10(L12)X complex, where L10 forms an elongated spine to which 2 to 4 L12 dimers bind in a sequential fashion. Binds GTP-bound translation factors.

Functionally, forms part of the ribosomal stalk which helps the ribosome interact with GTP-bound translation factors. Is thus essential for accurate translation. This chain is Large ribosomal subunit protein bL12, found in Psychromonas ingrahamii (strain DSM 17664 / CCUG 51855 / 37).